The sequence spans 419 residues: uncharacterized protein (419 aa).

The next 12 helical transmembrane spans lie at 15-35 (RVLM…MPYL), 36-56 (ADYL…VMGV), 77-99 (YKPL…VVAQ), 104-126 (VLIA…RGYL), 140-160 (MFNV…LVLL), 166-186 (ITVL…LVAL), 213-233 (FLTL…IYLA), 246-266 (QYLL…GGQL), 282-302 (LVVG…IPNG), 309-329 (VAVM…AALF), 351-371 (FYST…GSLM), and 377-397 (LNTD…AVAG).

It belongs to the major facilitator superfamily.

Its subcellular location is the cell membrane. This is an uncharacterized protein from Mycobacterium tuberculosis (strain CDC 1551 / Oshkosh).